The following is a 106-amino-acid chain: NADH-quinone oxidoreductase subunit K (106 aa).

The next 3 membrane-spanning stretches (helical) occupy residues 10–30, 35–55, and 67–87; these read IHYYLILAMIIFTIGVAGVMV, VLIFMSVELILNSVNLVFVTF, and VVFFVMAIAAAEAAIGLAIVI.

Belongs to the complex I subunit 4L family. NDH-1 is composed of 14 different subunits. Subunits NuoA, H, J, K, L, M, N constitute the membrane sector of the complex.

The protein localises to the cell inner membrane. The catalysed reaction is a quinone + NADH + 5 H(+)(in) = a quinol + NAD(+) + 4 H(+)(out). In terms of biological role, NDH-1 shuttles electrons from NADH, via FMN and iron-sulfur (Fe-S) centers, to quinones in the respiratory chain. The immediate electron acceptor for the enzyme in this species is believed to be ubiquinone. Couples the redox reaction to proton translocation (for every two electrons transferred, four hydrogen ions are translocated across the cytoplasmic membrane), and thus conserves the redox energy in a proton gradient. The protein is NADH-quinone oxidoreductase subunit K of Leptospira interrogans serogroup Icterohaemorrhagiae serovar copenhageni (strain Fiocruz L1-130).